The following is a 458-amino-acid chain: Glutamyl-tRNA reductase (458 aa).

Residues 49 to 52 (TCNR), Ser-109, 114 to 116 (EQQ), and Gln-120 contribute to the substrate site. Residue Cys-50 is the Nucleophile of the active site. 191–196 (GAGAMA) is an NADP(+) binding site.

Belongs to the glutamyl-tRNA reductase family. Homodimer.

It carries out the reaction (S)-4-amino-5-oxopentanoate + tRNA(Glu) + NADP(+) = L-glutamyl-tRNA(Glu) + NADPH + H(+). It participates in porphyrin-containing compound metabolism; protoporphyrin-IX biosynthesis; 5-aminolevulinate from L-glutamyl-tRNA(Glu): step 1/2. Its function is as follows. Catalyzes the NADPH-dependent reduction of glutamyl-tRNA(Glu) to glutamate 1-semialdehyde (GSA). The sequence is that of Glutamyl-tRNA reductase from Corynebacterium aurimucosum (strain ATCC 700975 / DSM 44827 / CIP 107346 / CN-1) (Corynebacterium nigricans).